Consider the following 498-residue polypeptide: Glycerol kinase (498 aa).

ADP is bound at residue Thr-11. ATP contacts are provided by Thr-11, Ser-12, and Ser-13. A sn-glycerol 3-phosphate-binding site is contributed by Thr-11. ADP is bound at residue Arg-15. Arg-81, Glu-82, Tyr-133, and Asp-242 together coordinate sn-glycerol 3-phosphate. Positions 81, 82, 133, 242, and 243 each coordinate glycerol. The ADP site is built by Thr-264 and Gly-307. ATP is bound by residues Thr-264, Gly-307, Gln-311, and Gly-412. 2 residues coordinate ADP: Gly-412 and Asn-416.

This sequence belongs to the FGGY kinase family.

It carries out the reaction glycerol + ATP = sn-glycerol 3-phosphate + ADP + H(+). It functions in the pathway polyol metabolism; glycerol degradation via glycerol kinase pathway; sn-glycerol 3-phosphate from glycerol: step 1/1. Its activity is regulated as follows. Inhibited by fructose 1,6-bisphosphate (FBP). Its function is as follows. Key enzyme in the regulation of glycerol uptake and metabolism. Catalyzes the phosphorylation of glycerol to yield sn-glycerol 3-phosphate. This Acidovorax ebreus (strain TPSY) (Diaphorobacter sp. (strain TPSY)) protein is Glycerol kinase.